A 485-amino-acid polypeptide reads, in one-letter code: U4/U6 small nuclear ribonucleoprotein Prp31 homolog (485 aa).

Disordered stretches follow at residues 1-36 and 329-361; these read MATL…EEDV and IEKW…RRLR. Over residues 11–36 the composition is skewed to acidic residues; it reads DLDELSDNEAELDENDGDVGKEEEDV. Residues 216-334 form the Nop domain; sequence IAPNLSAIVG…IRKKIEKWQE (119 aa). Residues 334-348 show a composition bias toward pro residues; it reads EPPPARQPKPLPVPD. A compositionally biased stretch (basic residues) spans 352–361; the sequence is KKRRGGRRLR. The short motif at 352–365 is the Nuclear localization signal element; that stretch reads KKRRGGRRLRKMKE.

This sequence belongs to the PRP31 family. As to quaternary structure, component of the U4/U6-U5 tri-snRNP complex composed of the U4, U6 and U5 snRNAs and pre-mRNA-splicing factors. Interacts with STA1 and SOP1.

Its subcellular location is the nucleus. The protein localises to the cajal body. In terms of biological role, involved in pre-mRNA splicing. Required for the assembly of the U4/U5/U6 tri-snRNP complex, one of the building blocks of the spliceosome. Functions in association with STA1 and ZOP1 in spliceosome dynamics and pre-mRNA splicing. Required for transcriptional regulation and pre-mRNA splicing of cold-responsive genes, such as LTI78/RD29A, KIN2/COR6.6 or COR15A, especially under cold stress. May play a role in stress response. Involved in transcriptional gene silencing of endogenous transposable elements, independently of the RNA-directed DNA methylation (RdDM) pathway. Seems not to participate in the small RNA biogenesis of the RdDM pathway. This chain is U4/U6 small nuclear ribonucleoprotein Prp31 homolog, found in Arabidopsis thaliana (Mouse-ear cress).